A 266-amino-acid chain; its full sequence is DNA damage-regulated autophagy modulator protein 2 (266 aa).

6 helical membrane-spanning segments follow: residues 8 to 28 (LSFL…FSYI), 53 to 73 (KCLF…TIYV), 92 to 112 (NKAG…VANF), 117 to 137 (FFAV…LYMF), 160 to 180 (LLLV…SSLL), and 207 to 227 (ITTA…LTYI).

Belongs to the DRAM/TMEM150 family.

It is found in the lysosome membrane. The protein localises to the photoreceptor inner segment. The protein resides in the apical cell membrane. Its function is as follows. Plays a role in the initiation of autophagy. In the retina, might be involved in the process of photoreceptor cells renewal and recycling to preserve visual function. Induces apoptotic cell death when coexpressed with DRAM1. This Bos taurus (Bovine) protein is DNA damage-regulated autophagy modulator protein 2 (DRAM2).